Reading from the N-terminus, the 197-residue chain is dITP/XTP pyrophosphatase (197 aa).

10–15 (SHNGGK) serves as a coordination point for substrate. Mg(2+)-binding residues include glutamate 41 and aspartate 70. Aspartate 70 functions as the Proton acceptor in the catalytic mechanism. Residues serine 71, 154–157 (FGYD), lysine 177, and 182–183 (HR) contribute to the substrate site.

Belongs to the HAM1 NTPase family. As to quaternary structure, homodimer. The cofactor is Mg(2+).

It carries out the reaction XTP + H2O = XMP + diphosphate + H(+). The catalysed reaction is dITP + H2O = dIMP + diphosphate + H(+). The enzyme catalyses ITP + H2O = IMP + diphosphate + H(+). Functionally, pyrophosphatase that catalyzes the hydrolysis of nucleoside triphosphates to their monophosphate derivatives, with a high preference for the non-canonical purine nucleotides XTP (xanthosine triphosphate), dITP (deoxyinosine triphosphate) and ITP. Seems to function as a house-cleaning enzyme that removes non-canonical purine nucleotides from the nucleotide pool, thus preventing their incorporation into DNA/RNA and avoiding chromosomal lesions. This is dITP/XTP pyrophosphatase from Pseudomonas syringae pv. tomato (strain ATCC BAA-871 / DC3000).